The sequence spans 361 residues: MLLELAQWFAGDIRLLNVFSYITLRTVLAALTALIISFIVGPAMIRKLTAYKIGQAVRDDGPQTHLVKAGTPTMGGALILVSIAITTLLWADLSNRYVWIVLITTLGFGMIGWVDDYRKVVYRNPKGLSARAKLFWQSAIAILVALYLVLTAELPAQTTLIVPFFKQVAVPLGVTGFVALTYFVIVGTSNAVNLTDGLDGLAIMPTVMISSALAIFSYVAGHAVFAKYLGMPHIPQAGELAVFCGALAGAGLAFLWFNAYPAEVFMGDVGALALGAALGIVTVIVRQEIVMLIMGGVFVVETLSVMLQVASFKLIGKRIFRMAPLHHHYELKGWKENQVVVRFWIITMMLVLFGLSSLKLR.

Transmembrane regions (helical) follow at residues 25-45, 73-93, 97-117, 134-154, 168-188, 200-220, 237-257, 264-284, 289-309, and 338-358; these read RTVL…PAMI, TMGG…WADL, YVWI…VDDY, LFWQ…TAEL, VAVP…IVGT, GLAI…SYVA, AGEL…FLWF, VFMG…VTVI, IVML…MLQV, and QVVV…LSSL.

Belongs to the glycosyltransferase 4 family. MraY subfamily. Mg(2+) serves as cofactor.

It localises to the cell inner membrane. The catalysed reaction is UDP-N-acetyl-alpha-D-muramoyl-L-alanyl-gamma-D-glutamyl-meso-2,6-diaminopimeloyl-D-alanyl-D-alanine + di-trans,octa-cis-undecaprenyl phosphate = di-trans,octa-cis-undecaprenyl diphospho-N-acetyl-alpha-D-muramoyl-L-alanyl-D-glutamyl-meso-2,6-diaminopimeloyl-D-alanyl-D-alanine + UMP. Its pathway is cell wall biogenesis; peptidoglycan biosynthesis. In terms of biological role, catalyzes the initial step of the lipid cycle reactions in the biosynthesis of the cell wall peptidoglycan: transfers peptidoglycan precursor phospho-MurNAc-pentapeptide from UDP-MurNAc-pentapeptide onto the lipid carrier undecaprenyl phosphate, yielding undecaprenyl-pyrophosphoryl-MurNAc-pentapeptide, known as lipid I. This Nitrosospira multiformis (strain ATCC 25196 / NCIMB 11849 / C 71) protein is Phospho-N-acetylmuramoyl-pentapeptide-transferase.